A 245-amino-acid polypeptide reads, in one-letter code: MVPWLGPDDPFPPVERALGANSGAPGLLAASGDLLPSRLIDAYRRGIFPWYSDGQPVLWWSPDPRMILRPAEFKVSPSLRKTLRRVLRDDAWEIRVDHDFAAVMRACAQAPRRGQRGTWITADVVEAYSSLHRVGDAHSIETWFEGRRVGGLYGVSFGKMFFGESMFAEVTDASKMALAALVGHLRRHEIEMIDCQQNTSHLASLGGREIARKAFIAHVRASVEAPPIPWLFDKTVLLEIVAPAA.

This sequence belongs to the L/F-transferase family.

The protein localises to the cytoplasm. It carries out the reaction N-terminal L-lysyl-[protein] + L-leucyl-tRNA(Leu) = N-terminal L-leucyl-L-lysyl-[protein] + tRNA(Leu) + H(+). The enzyme catalyses N-terminal L-arginyl-[protein] + L-leucyl-tRNA(Leu) = N-terminal L-leucyl-L-arginyl-[protein] + tRNA(Leu) + H(+). It catalyses the reaction L-phenylalanyl-tRNA(Phe) + an N-terminal L-alpha-aminoacyl-[protein] = an N-terminal L-phenylalanyl-L-alpha-aminoacyl-[protein] + tRNA(Phe). Its function is as follows. Functions in the N-end rule pathway of protein degradation where it conjugates Leu, Phe and, less efficiently, Met from aminoacyl-tRNAs to the N-termini of proteins containing an N-terminal arginine or lysine. This is Leucyl/phenylalanyl-tRNA--protein transferase from Paraburkholderia xenovorans (strain LB400).